Here is a 105-residue protein sequence, read N- to C-terminus: Small ribosomal subunit protein uS10 (105 aa).

It belongs to the universal ribosomal protein uS10 family. In terms of assembly, part of the 30S ribosomal subunit.

Its function is as follows. Involved in the binding of tRNA to the ribosomes. In Synechococcus sp. (strain JA-3-3Ab) (Cyanobacteria bacterium Yellowstone A-Prime), this protein is Small ribosomal subunit protein uS10.